Reading from the N-terminus, the 132-residue chain is MATRHQVRQSVISLLYAFELNSQNNVFVDEILDEKKIRNEQKNFTLNLYHGILDNLNNIDETLNSFLNDNQITALGHVERAILRLGAYELLFTNTPSAIVINEAIELAKELANDNSPKFMNGVLDALIKAKK.

The protein belongs to the NusB family.

Functionally, involved in transcription antitermination. Required for transcription of ribosomal RNA (rRNA) genes. Binds specifically to the boxA antiterminator sequence of the ribosomal RNA (rrn) operons. This Campylobacter jejuni subsp. doylei (strain ATCC BAA-1458 / RM4099 / 269.97) protein is Transcription antitermination protein NusB.